We begin with the raw amino-acid sequence, 225 residues long: Protein ZW2 (225 aa).

The 219-residue stretch at 7 to 225 (SETFASFFND…FYLRLRDLGV (219 aa)) folds into the DOG1 domain.

Its function is as follows. May be involved in the regulation of abscisic acid (ABA) sensitivity. In Arabidopsis thaliana (Mouse-ear cress), this protein is Protein ZW2.